Reading from the N-terminus, the 204-residue chain is Probable chorismate pyruvate-lyase (204 aa).

Substrate contacts are provided by R78, L131, and E190.

Belongs to the UbiC family.

The protein resides in the cytoplasm. It carries out the reaction chorismate = 4-hydroxybenzoate + pyruvate. The protein operates within cofactor biosynthesis; ubiquinone biosynthesis. Removes the pyruvyl group from chorismate, with concomitant aromatization of the ring, to provide 4-hydroxybenzoate (4HB) for the ubiquinone pathway. This chain is Probable chorismate pyruvate-lyase, found in Shewanella frigidimarina (strain NCIMB 400).